The sequence spans 167 residues: Small ribosomal subunit protein uS5 (167 aa).

The S5 DRBM domain occupies 12 to 75; it reads LQEKLIAVNR…EKARRNMVTI (64 aa).

The protein belongs to the universal ribosomal protein uS5 family. As to quaternary structure, part of the 30S ribosomal subunit. Contacts proteins S4 and S8.

In terms of biological role, with S4 and S12 plays an important role in translational accuracy. Located at the back of the 30S subunit body where it stabilizes the conformation of the head with respect to the body. In Vibrio vulnificus (strain CMCP6), this protein is Small ribosomal subunit protein uS5.